The primary structure comprises 95 residues: Neurexophilin-3 (95 aa).

2 N-linked (GlcNAc...) asparagine glycosylation sites follow: Asn-1 and Asn-7. The tract at residues 1–21 (NATGQGNISISLVPPSKAVEX) is III. The tract at residues 22–30 (HQXQQIFIE) is IV (linker domain). The tract at residues 31 to 95 (AKASKIFNCR…YIAFYSTDYR (65 aa)) is v (Cys-rich).

It belongs to the neurexophilin family.

It localises to the secreted. May be signaling molecules that resemble neuropeptides. Ligand for alpha-neurexins. In Macaca mulatta (Rhesus macaque), this protein is Neurexophilin-3 (NXPH3).